A 492-amino-acid chain; its full sequence is Aspartyl/glutamyl-tRNA(Asn/Gln) amidotransferase subunit B (492 aa).

It belongs to the GatB/GatE family. GatB subfamily. Heterotrimer of A, B and C subunits.

It catalyses the reaction L-glutamyl-tRNA(Gln) + L-glutamine + ATP + H2O = L-glutaminyl-tRNA(Gln) + L-glutamate + ADP + phosphate + H(+). It carries out the reaction L-aspartyl-tRNA(Asn) + L-glutamine + ATP + H2O = L-asparaginyl-tRNA(Asn) + L-glutamate + ADP + phosphate + 2 H(+). Its function is as follows. Allows the formation of correctly charged Asn-tRNA(Asn) or Gln-tRNA(Gln) through the transamidation of misacylated Asp-tRNA(Asn) or Glu-tRNA(Gln) in organisms which lack either or both of asparaginyl-tRNA or glutaminyl-tRNA synthetases. The reaction takes place in the presence of glutamine and ATP through an activated phospho-Asp-tRNA(Asn) or phospho-Glu-tRNA(Gln). In Azorhizobium caulinodans (strain ATCC 43989 / DSM 5975 / JCM 20966 / LMG 6465 / NBRC 14845 / NCIMB 13405 / ORS 571), this protein is Aspartyl/glutamyl-tRNA(Asn/Gln) amidotransferase subunit B.